Consider the following 86-residue polypeptide: uncharacterized protein (86 aa).

2 helical membrane passes run 21 to 43 (VFWV…EATA) and 53 to 75 (FWYA…YFYF).

The protein resides in the cell membrane. This is an uncharacterized protein from Archaeoglobus fulgidus (strain ATCC 49558 / DSM 4304 / JCM 9628 / NBRC 100126 / VC-16).